The chain runs to 147 residues: Hemoglobin subunit beta (147 aa).

At V2 the chain carries N-acetylvaline. In terms of domain architecture, Globin spans 3 to 147 (HLTGEEKSAV…VANALAHKYH (145 aa)). Residue T13 is modified to Phosphothreonine. Phosphoserine is present on S45. At K60 the chain carries N6-acetyllysine. H64 provides a ligand contact to heme b. K83 is modified (N6-acetyllysine). H93 contributes to the heme b binding site. C94 is subject to S-nitrosocysteine. N6-acetyllysine is present on K145.

This sequence belongs to the globin family. As to quaternary structure, heterotetramer of two alpha chains and two beta chains. Red blood cells.

Its function is as follows. Involved in oxygen transport from the lung to the various peripheral tissues. This chain is Hemoglobin subunit beta (HBB), found in Callimico goeldii (Goeldi's marmoset).